The sequence spans 560 residues: Arginine--tRNA ligase (560 aa).

A 'HIGH' region motif is present at residues 135-145; that stretch reads ANPTGLLHMGN.

This sequence belongs to the class-I aminoacyl-tRNA synthetase family. As to quaternary structure, monomer.

The protein resides in the cytoplasm. The catalysed reaction is tRNA(Arg) + L-arginine + ATP = L-arginyl-tRNA(Arg) + AMP + diphosphate. This chain is Arginine--tRNA ligase, found in Moorella thermoacetica (strain ATCC 39073 / JCM 9320).